The primary structure comprises 300 residues: ATP synthase gamma chain (300 aa).

It belongs to the ATPase gamma chain family. F-type ATPases have 2 components, CF(1) - the catalytic core - and CF(0) - the membrane proton channel. CF(1) has five subunits: alpha(3), beta(3), gamma(1), delta(1), epsilon(1). CF(0) has three main subunits: a, b and c.

It is found in the cell membrane. Functionally, produces ATP from ADP in the presence of a proton gradient across the membrane. The gamma chain is believed to be important in regulating ATPase activity and the flow of protons through the CF(0) complex. In Acidothermus cellulolyticus (strain ATCC 43068 / DSM 8971 / 11B), this protein is ATP synthase gamma chain.